The sequence spans 2163 residues: Myosin-VIIa (2163 aa).

The Myosin motor domain maps to 58 to 728; that stretch reads QGVEDMISLG…HDLFLEQERD (671 aa). 151-158 lines the ATP pocket; that stretch reads GESGAGKT. Actin-binding regions lie at residues 607–629 and 707–721; these read LDSLMKTLSSCQPFFIRCIKPNE and QLGHTKVFLKDAHDL. IQ domains lie at 731 to 753, 754 to 783, 800 to 822, and 823 to 852; these read LTRKILILQRSIRGWVYRRRFLR, MRQAAVTIQKFWKGYAQRQRYKKMKIGYMR, LRGHIVRLQARIRGYLVRREYGL, and KMWAVIKIQSHVRRMIAMNRYQKLKLEYRR. A coiled-coil region spans residues 886–914; the sequence is RLNEIERKEIEQELEERRRVEVKKNIIND. The tract at residues 937–958 is disordered; it reads PDSSSEAPTPHGGRETSVFNDL. The 237-residue stretch at 1003 to 1239 folds into the MyTH4 1 domain; sequence YSRKPLKHPL…PSWLELQATK (237 aa). The FERM 1 domain maps to 1244-1554; sequence IMLPITFMDG…YFLEGLKKRS (311 aa). Residues 1552–1621 enclose the SH3 domain; that stretch reads KRSKFVIALQ…PAEIVYVLPS (70 aa). A MyTH4 2 domain is found at 1697-1845; that stretch reads YSREPLKQPL…PHQVEVEAIQ (149 aa). The region spanning 1851 to 2154 is the FERM 2 domain; it reads IFHKVYFPDD…SYISLMLTNM (304 aa).

The protein belongs to the TRAFAC class myosin-kinesin ATPase superfamily. Myosin family. As to quaternary structure, homodimerizes in a two headed molecule through the formation of a coiled-coil rod.

It localises to the cytoplasm. Its function is as follows. Myosins are actin-based motor molecules with ATPase activity. Unconventional myosins serve in intracellular movements: can function in cells as a single-molecule cargo transporter. A very slow and high-duty-ratio motor, may be suitable for tension maintenance of actin filaments. Their highly divergent tails are presumed to bind to membranous compartments, which would be moved relative to actin filaments. Plays a key role in the formation of cellular projections and other actin-based functions required for embryonic and larval viability. Necessary for auditory transduction: plays a role in Johnston organ (JO) organization by functioning in scolopidial apical attachment and therefore to acoustic stimulus propagation from the antenna a2/a3 joint to transducing elements. The polypeptide is Myosin-VIIa (Aedes aegypti (Yellowfever mosquito)).